The primary structure comprises 458 residues: UDP-N-acetylmuramate--L-alanine ligase (458 aa).

An ATP-binding site is contributed by 112-118; sequence GTHGKTT.

The protein belongs to the MurCDEF family.

The protein resides in the cytoplasm. The enzyme catalyses UDP-N-acetyl-alpha-D-muramate + L-alanine + ATP = UDP-N-acetyl-alpha-D-muramoyl-L-alanine + ADP + phosphate + H(+). The protein operates within cell wall biogenesis; peptidoglycan biosynthesis. Its function is as follows. Cell wall formation. The protein is UDP-N-acetylmuramate--L-alanine ligase of Geotalea daltonii (strain DSM 22248 / JCM 15807 / FRC-32) (Geobacter daltonii).